We begin with the raw amino-acid sequence, 817 residues long: LisH domain-containing protein ARMC9 (817 aa).

The LisH domain maps to 7–39 (HESELLGLVKEYLDFAEFEDTLKTFSKECKVKG). Residues 204-230 (GPNSKELLQQLHQQLVEAERRAMTYLK) adopt a coiled-coil conformation. At Ser-583 the chain carries Phosphoserine. 2 disordered regions span residues 637-659 (RKGP…TPGG) and 761-817 (CKPQ…SIRK). Polar residues predominate over residues 765–774 (VPSTPETVEQ). Over residues 793 to 807 (PQQASRPASTASSTR) the composition is skewed to low complexity. Positions 808 to 817 (GLHSSQSIRK) are enriched in polar residues.

In terms of assembly, interacts with TOGARAM1, CCDC66, CEP104, CSPP1 and CEP290. Interacts with NDUFAF2.

The protein resides in the cytoplasm. It is found in the cytoskeleton. It localises to the cilium basal body. Its subcellular location is the cell projection. The protein localises to the cilium. The protein resides in the microtubule organizing center. It is found in the centrosome. It localises to the centriole. Involved in ciliogenesis. It is required for appropriate acetylation and polyglutamylation of ciliary microtubules, and regulation of cilium length. Acts as a positive regulator of hedgehog (Hh) signaling. May participate in the trafficking and/or retention of GLI2 and GLI3 proteins at the ciliary tip. This is LisH domain-containing protein ARMC9 from Mus musculus (Mouse).